Here is a 384-residue protein sequence, read N- to C-terminus: Lipid-A-disaccharide synthase (384 aa).

This sequence belongs to the LpxB family.

The catalysed reaction is a lipid X + a UDP-2-N,3-O-bis[(3R)-3-hydroxyacyl]-alpha-D-glucosamine = a lipid A disaccharide + UDP + H(+). The protein operates within bacterial outer membrane biogenesis; LPS lipid A biosynthesis. In terms of biological role, condensation of UDP-2,3-diacylglucosamine and 2,3-diacylglucosamine-1-phosphate to form lipid A disaccharide, a precursor of lipid A, a phosphorylated glycolipid that anchors the lipopolysaccharide to the outer membrane of the cell. In Neisseria meningitidis serogroup C / serotype 2a (strain ATCC 700532 / DSM 15464 / FAM18), this protein is Lipid-A-disaccharide synthase.